The sequence spans 181 residues: uncharacterized protein (181 aa).

The protein to M.pneumoniae MPN_635 C-terminal region.

This is an uncharacterized protein from Mycoplasma pneumoniae (strain ATCC 29342 / M129 / Subtype 1) (Mycoplasmoides pneumoniae).